A 157-amino-acid chain; its full sequence is Baculoviral IAP repeat-containing protein 5.2-A (157 aa).

A BIR repeat occupies 31-101; it reads RLRTFSNWPF…KHSPSCLFIA (71 aa). Thr-47 bears the Phosphothreonine; by CDK1 mark. Zn(2+)-binding residues include Cys-70, Cys-73, His-90, and Cys-97.

The protein belongs to the IAP family. As to quaternary structure, component of the CPC at least composed of survivin/birc5, incenp, cdca8/borealin and/or cdca9/dasra-A, and aurkb/aurora-B. Interacts directly with incenp (via N-terminus). Interacts with rxra; the interaction is stronger in the absence of 9-cis retinoic acids. In terms of processing, ubiquitination is required for centrosome-targeting. As to expression, highly expressed in vascular endothelial cells of tadpoles.

It is found in the cytoplasm. It localises to the nucleus. Its subcellular location is the chromosome. The protein resides in the centromere. The protein localises to the cytoskeleton. It is found in the spindle. Its function is as follows. Component of the chromosomal passenger complex (CPC), a complex that acts as a key regulator of mitosis. The CPC complex has essential functions at the centromere in ensuring correct chromosome alignment and segregation and is required for chromatin-induced microtubule stabilization and spindle assembly. Does not appear to exhibit anti-apoptotic activity. Plays a role in increasing blood vessel size during development. In Xenopus laevis (African clawed frog), this protein is Baculoviral IAP repeat-containing protein 5.2-A (birc5.2-a).